The following is a 378-amino-acid chain: Coiled-coil domain-containing protein 74A (378 aa).

3 disordered regions span residues 1-52 (MSGA…RNLD), 128-211 (GGPS…EEPL), and 301-328 (EGSQ…PKVS). Over residues 34 to 44 (LRPQSPQLRQS) the composition is skewed to polar residues. The stretch at 47–90 (QKRNLDLEKSLQFLQQQHSEMLAKLHEEIEHLKRENKDLHYKLI) forms a coiled coil. The span at 141–151 (RTHRPGGKRGR) shows a compositional bias: basic residues. Residues 165 to 182 (DSLSMSSFQSVKSISNSG) are compositionally biased toward polar residues. 2 stretches are compositionally biased toward basic and acidic residues: residues 194-205 (QDSKADVSQKAD) and 314-323 (SFPRDQEATH).

This Homo sapiens (Human) protein is Coiled-coil domain-containing protein 74A (CCDC74A).